A 71-amino-acid polypeptide reads, in one-letter code: Gas vesicle protein A (71 aa).

Positions 12-22 (LAEVIDRILDK) are alpha helix 1. Residues 23–32 (GIVIDAWVRV) form a beta-strand 1 region. The beta turn stretch occupies residues 33–36 (SLVG). The segment at 37–46 (IELLAIEARI) is beta-strand 2. The segment at 47–70 (VIASVETYLKYAEAVGLTQSAAVP) is alpha helix 2.

This sequence belongs to the gas vesicle GvpA family. As to quaternary structure, the gas vesicle shell is 2 nm thick and consists of a single layer of this protein. It forms helical ribs nearly perpendicular to the long axis of the vesicle.

Its subcellular location is the gas vesicle shell. Functionally, gas vesicles (GV) are hollow, gas filled proteinaceous nanostructures found in some microorganisms. During planktonic growth they allow positioning of the organism at a favorable depth for light or nutrient acquisition. GVs are highly permeable to gas. GvpA forms the protein shell. The ratio of GvpA:GvpC is estimated to be 33:1 and more recently 25:1. The protein is Gas vesicle protein A of Dolichospermum flosaquae (Anabaena flos-aquae).